A 595-amino-acid polypeptide reads, in one-letter code: UvrABC system protein C (595 aa).

The 78-residue stretch at 14–91 folds into the GIY-YIG domain; the sequence is SNPGCYLHKD…IQENMPKFNI (78 aa). The UVR domain occupies 196-231; that stretch reads DKIVNQLKAKMKDMSDQMEFERAAEYRDLIEAVSTL.

This sequence belongs to the UvrC family. Interacts with UvrB in an incision complex.

It is found in the cytoplasm. In terms of biological role, the UvrABC repair system catalyzes the recognition and processing of DNA lesions. UvrC both incises the 5' and 3' sides of the lesion. The N-terminal half is responsible for the 3' incision and the C-terminal half is responsible for the 5' incision. This chain is UvrABC system protein C, found in Streptococcus thermophilus (strain CNRZ 1066).